The primary structure comprises 171 residues: MNIRQQLVQLLNLAMVLSTAFMFWKGLGLVTNSNSPIVVVLSGSMEPAFQRGDILFLWNRDKYVDIGDVVVYEVKGKPIPIVHRVLREHKVTNKDRKVRQLLLTKGDNNPTDDLSLYAHKSNYLDRDEDVLGTVKAYLPKVGYVTILITENKYAKLGLLGLMALSTLLTRE.

Residues 1–6 (MNIRQQ) are Cytoplasmic-facing. A helical; Signal-anchor for type II membrane protein transmembrane segment spans residues 7-24 (LVQLLNLAMVLSTAFMFW). Over 25–171 (KGLGLVTNSN…MALSTLLTRE (147 aa)) the chain is Lumenal. Residues Ser44, His83, and Asp113 each act as charge relay system in the active site. Residues 157–168 (GLLGLMALSTLL) are C-terminal short (CTS) helix.

This sequence belongs to the peptidase S26B family. Component of the signal peptidase complex (SPC) composed of a catalytic subunit SEC11 and three accessory subunits SPC1, SPC2 and SPC3. The complex induces a local thinning of the ER membrane which is used to measure the length of the signal peptide (SP) h-region of protein substrates. This ensures the selectivity of the complex towards h-regions shorter than 18-20 amino acids. SPC associates with the translocon complex.

The protein resides in the endoplasmic reticulum membrane. It catalyses the reaction Cleavage of hydrophobic, N-terminal signal or leader sequences from secreted and periplasmic proteins.. Functionally, catalytic component of the signal peptidase complex (SPC) which catalyzes the cleavage of N-terminal signal sequences from nascent proteins as they are translocated into the lumen of the endoplasmic reticulum. Specifically cleaves N-terminal signal peptides that contain a hydrophobic alpha-helix (h-region) shorter than 18-20 amino acids. The sequence is that of Signal peptidase complex catalytic subunit SEC11 (SEC11) from Komagataella phaffii (strain GS115 / ATCC 20864) (Yeast).